The following is a 2458-amino-acid chain: Acetyl-CoA carboxylase 2 (2458 aa).

Position 35 is a phosphoserine (serine 35). A disordered region spans residues 35 to 155 (SKSEANLIPS…SPSKEDKKQA (121 aa)). Residues 51–60 (SDNSGETPQR) are compositionally biased toward polar residues. At threonine 70 the chain carries Phosphothreonine. The segment covering 77 to 87 (ASHKGPKDAGR) has biased composition (basic and acidic residues). A phosphoserine mark is found at serine 91 and serine 95. The span at 103–146 (PLSSSDAAPSPELQANGTGTQGLEATDTNGLSSSARPQGQQAGS) shows a compositional bias: polar residues. Residues serine 169, serine 175, serine 192, serine 195, and serine 200 each carry the phosphoserine modification. The segment at 174–193 (SSDEDSVAGSSRESTRKGSR) is disordered. A Phosphothreonine modification is found at threonine 207. Residue serine 220 is modified to Phosphoserine. Phosphoserine; by AMPK is present on serine 222. Residues 259–761 (VIEKVLIANN…DTGWLDYLIA (503 aa)) form the Biotin carboxylation domain. The 196-residue stretch at 414-609 (DDLQQGKRIS…LPAAQLQIAM (196 aa)) folds into the ATP-grasp domain. 458-463 (GGGGKG) provides a ligand contact to ATP. Position 469 is a phosphoserine (serine 469). Glutamate 567, glutamate 580, and asparagine 582 together coordinate Mg(2+). Glutamate 567, glutamate 580, and asparagine 582 together coordinate Mn(2+). Arginine 584 is a catalytic residue. A Phosphothreonine modification is found at threonine 753. In terms of domain architecture, Biotinyl-binding spans 888–962 (FEKENDPTVL…EAGCVVARLE (75 aa)). At lysine 929 the chain carries N6-biotinyllysine. Phosphoserine is present on serine 1340. Threonine 1342 bears the Phosphothreonine mark. Serine 1360 and serine 1405 each carry phosphoserine. A CoA carboxyltransferase N-terminal domain is found at 1695-2025 (PYVTKDLLQA…DNHSPVPIIT (331 aa)). Residues 1695 to 2345 (PYVTKDLLQA…EDQVKQEILQ (651 aa)) form a carboxyltransferase region. Arginine 1934, lysine 2238, and arginine 2240 together coordinate CoA. In terms of domain architecture, CoA carboxyltransferase C-terminal spans 2029–2345 (PIDREIEFLP…EDQVKQEILQ (317 aa)).

In terms of assembly, monomer, homodimer, and homotetramer. Forms filamentous polymers. Interacts with MID1IP1; interaction with MID1IP1 promotes oligomerization and increases its activity in a citrate-dependent manner. The cofactor is biotin. Requires Mg(2+) as cofactor. Mn(2+) is required as a cofactor. Post-translationally, the biotin cofactor is covalently attached to the central biotinyl-binding domain and is required for the catalytic activity. Phosphorylation at Ser-222 by AMPK inactivates the enzyme. Required for the maintenance of skeletal muscle lipid and glucose homeostasis. In terms of tissue distribution, widely expressed with highest levels in heart, skeletal muscle, liver, adipose tissue, mammary gland, adrenal gland and colon. Isoform 3 is expressed in skeletal muscle, adipose tissue and liver (at protein level). Isoform 3 is detected at high levels in adipose tissue with lower levels in heart, liver, skeletal muscle and testis.

The protein resides in the mitochondrion. The enzyme catalyses hydrogencarbonate + acetyl-CoA + ATP = malonyl-CoA + ADP + phosphate + H(+). Its pathway is lipid metabolism; malonyl-CoA biosynthesis; malonyl-CoA from acetyl-CoA: step 1/1. Its activity is regulated as follows. Activity is increased by oligomerization of the protein into filaments. The oligomerization and the activity of the enzyme are inhibited by phosphorylation at Ser-222. Inhibited by its product, malonyl-CoA. Activated by citrate. Activation by MID1IP1 is citrate-dependent. Soraphen A, inhibits the enzyme by preventing the formation of active filamentous oligomers. Functionally, mitochondrial enzyme that catalyzes the carboxylation of acetyl-CoA to malonyl-CoA and plays a central role in fatty acid metabolism. Catalyzes a 2 steps reaction starting with the ATP-dependent carboxylation of the biotin carried by the biotin carboxyl carrier (BCC) domain followed by the transfer of the carboxyl group from carboxylated biotin to acetyl-CoA. Through the production of malonyl-CoA that allosterically inhibits carnitine palmitoyltransferase 1 at the mitochondria, negatively regulates fatty acid oxidation. Together with its cytosolic isozyme ACACA, which is involved in de novo fatty acid biosynthesis, promotes lipid storage. This Homo sapiens (Human) protein is Acetyl-CoA carboxylase 2.